The following is a 793-amino-acid chain: Ribosome biogenesis protein BOP1 homolog (793 aa).

Residues 1 to 11 (MTKKLTLKRKG) show a composition bias toward basic residues. The disordered stretch occupies residues 1–168 (MTKKLTLKRK…DSDTSDEEDI (168 aa)). Acidic residues-rich tracts occupy residues 44–53 (EDTTDDEGID), 60–72 (SSEDLEFESDEEG), and 83–116 (SSEEEDDDGDEEGEEEDEEEDDSEDGESADDGDE). The segment covering 117–129 (EKPTTSKQNKSED) has biased composition (basic and acidic residues). The segment covering 133–143 (SSKVSKKTQPP) has biased composition (polar residues). Positions 146–161 (DLVKRDPSHPEYHDSD) are enriched in basic and acidic residues. WD repeat units follow at residues 454-495 (GHTD…RTIE), 497-535 (EDVVRCVAWCPNAKLSIIAVATGNRLLLINPKVGDKVLV), 579-621 (NHFK…SQIP), 624-662 (KSKGLIQCVLFHPVKPCFFVATQHNIRIYDLVKQELVKK), 665-704 (TNSKWISGMSIHPKGDNLLVSTYDKKMLWFDLDLSTKPYQ), 708-747 (LHRNAVRSVAFHLRYPLFASGSDDQAVIVSHGMVYNDLLQ), and 763-793 (REDFGVLDVNWHPIQPWIFSTGADCTIRLYT).

This sequence belongs to the WD repeat BOP1/ERB1 family.

The protein localises to the nucleus. The protein resides in the nucleolus. Its subcellular location is the nucleoplasm. In terms of biological role, required for maturation of ribosomal RNAs and formation of the large ribosomal subunit. The chain is Ribosome biogenesis protein BOP1 homolog from Drosophila ananassae (Fruit fly).